The primary structure comprises 93 residues: Translation initiation factor IF-1 (93 aa).

In terms of domain architecture, S1-like spans 1–72 (MAKEELIQFE…EKGRLIFRHK (72 aa)). Residues 70–93 (RHKDERPGGGPPRGAPPRGQFRRR) are disordered.

This sequence belongs to the IF-1 family. As to quaternary structure, component of the 30S ribosomal translation pre-initiation complex which assembles on the 30S ribosome in the order IF-2 and IF-3, IF-1 and N-formylmethionyl-tRNA(fMet); mRNA recruitment can occur at any time during PIC assembly.

The protein localises to the cytoplasm. Functionally, one of the essential components for the initiation of protein synthesis. Stabilizes the binding of IF-2 and IF-3 on the 30S subunit to which N-formylmethionyl-tRNA(fMet) subsequently binds. Helps modulate mRNA selection, yielding the 30S pre-initiation complex (PIC). Upon addition of the 50S ribosomal subunit IF-1, IF-2 and IF-3 are released leaving the mature 70S translation initiation complex. This Rhodopseudomonas palustris (strain BisB18) protein is Translation initiation factor IF-1.